The chain runs to 798 residues: Ubiquitin carboxyl-terminal hydrolase 10 (798 aa).

Alanine 2 bears the N-acetylalanine mark. An interaction with p53/TP53 region spans residues 2 to 100; that stretch reads ALHSPQYIFG…ILGCTASKIT (99 aa). Residues 6 to 21 form a G3BP1-binding region; that stretch reads PQYIFGDFSPDEFNQF. Position 24 is a phosphothreonine (threonine 24). Threonine 42 carries the post-translational modification Phosphothreonine; by ATM. Position 100 is a phosphothreonine (threonine 100). Disordered regions lie at residues 139–166, 194–257, and 307–337; these read GVSG…LKDG, AEFM…CFPA, and TESI…LPVS. A compositionally biased stretch (polar residues) spans 205–219; it reads TPRTCNSPQNSTDSV. Serine 211 and serine 226 each carry phosphoserine. The segment covering 307–316 has biased composition (basic and acidic residues); sequence TESIDLDPTK. Residue serine 321 is modified to Phosphoserine. Polar residues predominate over residues 328–337; that stretch reads GSASGTLPVS. Serine 337 bears the Phosphoserine; by ATM mark. Residues serine 365 and serine 370 each carry the phosphoserine modification. Positions 415–795 constitute a USP domain; sequence RGLINKGNWC…TAYLLYYRRV (381 aa). Cysteine 424 serves as the catalytic Nucleophile. The residue at position 547 (serine 547) is a Phosphoserine. Positions 551–562 are enriched in polar residues; that stretch reads EKLTISNGPKNH. Residues 551 to 594 are disordered; that stretch reads EKLTISNGPKNHSVNEEEQEEQGEGSEDEWEQVGPRNKTSVTRQ. Residues serine 563 and serine 576 each carry the phosphoserine modification. The span at 566-581 shows a compositional bias: acidic residues; sequence EEEQEEQGEGSEDEWE. Histidine 749 functions as the Proton acceptor in the catalytic mechanism.

The protein belongs to the peptidase C19 family. USP10 subfamily. As to quaternary structure, found in a deubiquitination complex with TANK, USP10 and ZC3H12A; this complex inhibits genotoxic stress- or interleukin-1-beta (IL1B)-mediated NF-kappa-B activation by promoting IKBKG or TRAF6 deubiquitination. Interacts with IKBKG; this interaction increases in response to DNA damage. Interacts with TANK; this interaction increases in response to DNA damage. Interacts with TRAF6; this interaction increases in response to DNA damage. Interacts with ZC3H12A; this interaction increases in response to DNA damage. Interacts with G3BP1 (via NTF2 domain) and G3BP2 (via NTF2 domain); inhibiting stress granule formation. Phosphorylated by ATM following DNA damage, leading to stabilization and translocation it to the nucleus. Post-translationally, ubiquitinated. Deubiquitinated by USP13. In terms of tissue distribution, widely expressed.

The protein resides in the cytoplasm. It is found in the nucleus. Its subcellular location is the early endosome. It catalyses the reaction Thiol-dependent hydrolysis of ester, thioester, amide, peptide and isopeptide bonds formed by the C-terminal Gly of ubiquitin (a 76-residue protein attached to proteins as an intracellular targeting signal).. Its activity is regulated as follows. Specifically inhibited by spautin-1 (specific and potent autophagy inhibitor-1), a derivative of MBCQ that binds to USP10 and inhibits deubiquitinase activity. Regulated by PIK3C3/VPS34-containing complexes. In terms of biological role, hydrolase that can remove conjugated ubiquitin from target proteins such as p53/TP53, RPS2/us5, RPS3/us3, RPS10/eS10, BECN1, SNX3 and CFTR. Acts as an essential regulator of p53/TP53 stability: in unstressed cells, specifically deubiquitinates p53/TP53 in the cytoplasm, leading to counteract MDM2 action and stabilize p53/TP53. Following DNA damage, translocates to the nucleus and deubiquitinates p53/TP53, leading to regulate the p53/TP53-dependent DNA damage response. Component of a regulatory loop that controls autophagy and p53/TP53 levels: mediates deubiquitination of BECN1, a key regulator of autophagy, leading to stabilize the PIK3C3/VPS34-containing complexes. In turn, PIK3C3/VPS34-containing complexes regulate USP10 stability, suggesting the existence of a regulatory system by which PIK3C3/VPS34-containing complexes regulate p53/TP53 protein levels via USP10 and USP13. Does not deubiquitinate MDM2. Plays a key role in 40S ribosome subunit recycling when a ribosome has stalled during translation: acts both by inhibiting formation of stress granules, which store stalled translation pre-initiation complexes, and mediating deubiquitination of 40S ribosome subunits. Acts as a negative regulator of stress granules formation by lowering G3BP1 and G3BP2 valence, thereby preventing G3BP1 and G3BP2 ability to undergo liquid-liquid phase separation (LLPS) and assembly of stress granules. Promotes 40S ribosome subunit recycling following ribosome dissociation in response to ribosome stalling by mediating deubiquitination of 40S ribosomal proteins RPS2/us5, RPS3/us3 and RPS10/eS10, thereby preventing their degradation by the proteasome. Part of a ribosome quality control that takes place when ribosomes have stalled during translation initiation (iRQC): USP10 acts by removing monoubiquitination of RPS2/us5 and RPS3/us3, promoting 40S ribosomal subunit recycling. Deubiquitinates CFTR in early endosomes, enhancing its endocytic recycling. Involved in a TANK-dependent negative feedback response to attenuate NF-kappa-B activation via deubiquitinating IKBKG or TRAF6 in response to interleukin-1-beta (IL1B) stimulation or upon DNA damage. Deubiquitinates TBX21 leading to its stabilization. Plays a negative role in the RLR signaling pathway upon RNA virus infection by blocking the RIGI-mediated MAVS activation. Mechanistically, removes the unanchored 'Lys-63'-linked polyubiquitin chains of MAVS to inhibit its aggregation, essential for its activation. This is Ubiquitin carboxyl-terminal hydrolase 10 from Homo sapiens (Human).